Consider the following 108-residue polypeptide: Ribonuclease P protein component 4 (108 aa).

The Zn(2+) site is built by Cys67, Cys70, Cys93, and Cys96.

Belongs to the eukaryotic/archaeal RNase P protein component 4 family. As to quaternary structure, consists of a catalytic RNA component and at least 4-5 protein subunits. It depends on Zn(2+) as a cofactor.

It is found in the cytoplasm. It carries out the reaction Endonucleolytic cleavage of RNA, removing 5'-extranucleotides from tRNA precursor.. Functionally, part of ribonuclease P, a protein complex that generates mature tRNA molecules by cleaving their 5'-ends. The chain is Ribonuclease P protein component 4 from Methanococcoides burtonii (strain DSM 6242 / NBRC 107633 / OCM 468 / ACE-M).